Here is a 398-residue protein sequence, read N- to C-terminus: Tear acid lipase-like protein (398 aa).

The signal sequence occupies residues 1–19; it reads MSWLLSTMCLVHVCGNIFC. Ser170 acts as the Nucleophile in catalysis. Cys243 and Cys252 form a disulfide bridge. An N-linked (GlcNAc...) asparagine glycan is attached at Asn268. Catalysis depends on charge relay system residues Asp340 and His369.

It belongs to the AB hydrolase superfamily. Lipase family. In terms of assembly, monomer. Post-translationally, N-glycosylated. In terms of tissue distribution, expressed in female lacrimal gland acinar cells from where it is secreted into tears (at protein level).

It localises to the secreted. Functionally, female-specific protein which lacks detectable lipase activity against a range of substrates. Binds the hydrophobic lipid 1-aminoanthracene with high affinity. The sequence is that of Tear acid lipase-like protein from Mesocricetus auratus (Golden hamster).